A 236-amino-acid polypeptide reads, in one-letter code: MSVKARRISGRLETVVTKVNYAFDPVDDDKIIRNRLLTRTTTTRGEPPLKKLQKKFTSFVLEVDKEEENYNDCGRLAKAFLQELSTFEIPLLKSQAVVEANLREKESFNEVKDETERQIMQAKAEIEDLKKQLEESKIDRQHKEECETIRKLISAQPPRSETEKVIYELNKEIAELEAESTASWRLLELRKKQFALLMHVVDELQNTMEDEQKSLVDEIRSASEDQRNITDAMSVD.

Positions 99–228 (EANLREKESF…IRSASEDQRN (130 aa)) form a coiled coil.

It belongs to the THOC7 family. In terms of assembly, component of the THO complex, which is composed of THO1, THO2, THO3, THO5, THO6 and THO7.

It is found in the nucleus. In terms of biological role, acts as a component of the THO subcomplex of the TREX complex which is thought to couple mRNA transcription, processing and nuclear export. The sequence is that of THO complex subunit 7B (THO7B) from Arabidopsis thaliana (Mouse-ear cress).